We begin with the raw amino-acid sequence, 488 residues long: Histamine H1 receptor (488 aa).

At 1–29 the chain is on the extracellular side; sequence MSLPNTSSASEDKMCEGNRTAMASPQLLP. Residues Asn5 and Asn18 are each glycosylated (N-linked (GlcNAc...) asparagine). A helical membrane pass occupies residues 30–50; it reads LVVVLSSISLVTVGLNLLVLY. Residues 51-64 lie on the Cytoplasmic side of the membrane; the sequence is AVRSERKLHTVGNL. Residues 65–89 form a helical membrane-spanning segment; that stretch reads YIVSLSVADLIVGAVVMPMNILYLI. Residues 90 to 97 are Extracellular-facing; the sequence is MTKWSLGR. Residues 98 to 123 form a helical membrane-spanning segment; sequence PLCLFWLSMDYVASTASIFSVFILCI. Cys100 and Cys180 are oxidised to a cystine. Histamine contacts are provided by Asp107 and Thr112. The important for agonist binding stretch occupies residues 107–112; sequence DYVAST. Residues 124–144 lie on the Cytoplasmic side of the membrane; it reads DRYRSVQQPLRYLRYRTKTRA. Phosphothreonine occurs at positions 140 and 142. A helical membrane pass occupies residues 145 to 164; the sequence is SATILGAWFLSFLWVIPILG. At 165–188 the chain is on the extracellular side; sequence WHHFTPLAPELREDKCETDFYNVT. Residues 189 to 211 traverse the membrane as a helical segment; sequence WFKIMTAIINFYLPTLLMLWFYV. Position 198 (Asn198) interacts with histamine. The Cytoplasmic segment spans residues 212 to 417; that stretch reads KIYKAVRRHC…LNRERKAAKQ (206 aa). Residue Ser230 is modified to Phosphoserine. Residues 245–337 are disordered; the sequence is KEGAKKPGKE…SQPKMDEQSL (93 aa). Residues 322–337 are compositionally biased toward polar residues; it reads ANDQTLSQPKMDEQSL. 6 positions are modified to phosphoserine: Ser344, Ser347, Ser381, Ser383, Ser397, and Ser399. The helical transmembrane segment at 418 to 441 threads the bilayer; it reads LGCIMAAFILCWIPYFIFFMVIAF. The interval 425–429 is important for agonist binding; that stretch reads FILCW. Tyr432 serves as a coordination point for histamine. An intrachain disulfide couples Cys442 to Cys445. Over 442–447 the chain is Extracellular; sequence CNSCCS. The helical transmembrane segment at 448–470 threads the bilayer; sequence EPVHMFTIWLGYINSTLNPLIYP. At 471-488 the chain is on the cytoplasmic side; that stretch reads LCNENFKKTFKKILHIRS.

The protein belongs to the G-protein coupled receptor 1 family. In terms of processing, phosphorylation at sites in the second and third cytoplasmic loops independently contribute to agonist-induced receptor down-regulation.

It localises to the cell membrane. In terms of biological role, G-protein-coupled receptor for histamine, a biogenic amine that functions as an immune modulator and a neurotransmitter. Through the H1 receptor, histamine mediates the contraction of smooth muscles and increases capillary permeability due to contraction of terminal venules. Also mediates neurotransmission in the central nervous system and thereby regulates circadian rhythms, emotional and locomotor activities as well as cognitive functions. In Mus musculus (Mouse), this protein is Histamine H1 receptor.